The chain runs to 57 residues: Large ribosomal subunit protein bL32 (57 aa).

Over residues 1–16 the composition is skewed to basic residues; the sequence is MAVQKSRKTRSKRGMR. Residues 1-45 are disordered; it reads MAVQKSRKTRSKRGMRRSHDALTAPAQLSVDATSGETHRRHHMTA.

Belongs to the bacterial ribosomal protein bL32 family.

The sequence is that of Large ribosomal subunit protein bL32 from Psychromonas ingrahamii (strain DSM 17664 / CCUG 51855 / 37).